A 254-amino-acid polypeptide reads, in one-letter code: Dolichol-phosphate mannosyltransferase subunit 1 (254 aa).

Proline 25, tyrosine 27, glutamate 29, valine 56, aspartate 58, aspartate 111, alanine 112, aspartate 113, arginine 140, and arginine 227 together coordinate GDP-alpha-D-mannose. Residue aspartate 113 coordinates Mg(2+). Mn(2+) is bound at residue aspartate 113.

It belongs to the glycosyltransferase 2 family. Component of the dolichol-phosphate mannose (DPM) synthase complex composed of dpm1, dpm2 and dpm3. Mg(2+) is required as a cofactor. It depends on Mn(2+) as a cofactor. The cofactor is Ca(2+).

It localises to the endoplasmic reticulum. The catalysed reaction is a di-trans,poly-cis-dolichyl phosphate + GDP-alpha-D-mannose = a di-trans,poly-cis-dolichyl beta-D-mannosyl phosphate + GDP. It functions in the pathway protein modification; protein glycosylation. Transfers mannose from GDP-mannose to dolichol monophosphate to form dolichol phosphate mannose (Dol-P-Man) which is the mannosyl donor in pathways leading to N-glycosylation, glycosyl phosphatidylinositol membrane anchoring, and O-mannosylation of proteins; catalytic subunit of the dolichol-phosphate mannose (DPM) synthase complex. The sequence is that of Dolichol-phosphate mannosyltransferase subunit 1 (dpm1) from Dictyostelium discoideum (Social amoeba).